A 116-amino-acid polypeptide reads, in one-letter code: Venom nerve growth factor (116 aa).

3 disulfide bridges follow: Cys-14/Cys-78, Cys-56/Cys-106, and Cys-66/Cys-108. Lys-86 contacts a 1,2-diacyl-sn-glycerol.

It belongs to the NGF-beta family. In terms of assembly, homodimer; non-covalently linked. Interacts with NTRK1. In terms of processing, not glycosylated. Expressed by the venom gland.

The protein resides in the secreted. Nerve growth factor is important for the development and maintenance of the sympathetic and sensory nervous systems. It stimulates division and differentiation of sympathetic and embryonic sensory neurons as well as basal forebrain cholinergic neurons in the brain. Its relevance in the snake venom is not clear. However, it has been shown to inhibit metalloproteinase-dependent proteolysis of platelet glycoprotein Ib alpha, suggesting a metalloproteinase inhibition to prevent metalloprotease autodigestion and/or protection against prey proteases. Binds a lipid between the two protein chains in the homodimer. The lipid-bound form promotes histamine relase from mouse mast cells, contrary to the lipid-free form. This chain is Venom nerve growth factor, found in Naja atra (Chinese cobra).